The primary structure comprises 258 residues: D-beta-hydroxybutyrate dehydrogenase (258 aa).

6–30 contacts NAD(+); the sequence is VITGSTSGIGLAIARTLAKAGANIV. S140 contributes to the substrate binding site. Y153 functions as the Proton acceptor in the catalytic mechanism.

Belongs to the short-chain dehydrogenases/reductases (SDR) family.

The enzyme catalyses (R)-3-hydroxybutanoate + NAD(+) = acetoacetate + NADH + H(+). This is D-beta-hydroxybutyrate dehydrogenase (bdhA) from Rhizobium meliloti (strain 1021) (Ensifer meliloti).